We begin with the raw amino-acid sequence, 597 residues long: Gigaxonin (597 aa).

Residues Cys30–Glu99 form the BTB domain. The 103-residue stretch at Cys134–Leu236 folds into the BACK domain. Kelch repeat units follow at residues Cys274–Gly326, Phe327–Gly374, Leu376–Lys421, Lys422–Met468, Leu470–Ala522, and Ser528–Arg574.

Interacts with TBCB. Interacts with CUL3. Part of a complex that contains CUL3, RBX1 and GAN. Interacts (via BTB domain) with UBA1. Interacts (via Kelch domains) with MAP1B (via C-terminus) and MAP1S (via C-terminus). In terms of processing, ubiquitinated by E3 ubiquitin ligase complex formed by CUL3 and RBX1 and probably targeted for proteasome-independent degradation. In terms of tissue distribution, expressed in brain, heart and muscle.

The protein localises to the cytoplasm. It is found in the cytoskeleton. Its pathway is protein modification; protein ubiquitination. In terms of biological role, probable cytoskeletal component that directly or indirectly plays an important role in neurofilament architecture. May act as a substrate-specific adapter of an E3 ubiquitin-protein ligase complex which mediates the ubiquitination and subsequent proteasomal degradation of target proteins. Controls degradation of TBCB. Controls degradation of MAP1B and MAP1S, and is critical for neuronal maintenance and survival. The polypeptide is Gigaxonin (GAN) (Homo sapiens (Human)).